A 146-amino-acid polypeptide reads, in one-letter code: Globin (146 aa).

At S1 the chain carries N-acetylserine. Residues S1 to K146 form the Globin domain. H95 contributes to the heme b binding site.

Belongs to the globin family. Monomer.

The polypeptide is Globin (Bursatella leachii (Ragged sea hare)).